The following is a 493-amino-acid chain: GTPase Der (493 aa).

EngA-type G domains follow at residues 3-166 and 206-379; these read PVVA…AEAL and IKLA…KSAT. GTP-binding positions include 9–16, 56–60, 118–121, 212–219, 259–263, and 324–327; these read GRPNVGKS, DTGGI, NKVD, DTAGV, and NKWD. One can recognise a KH-like domain in the interval 380–464; that stretch reads TRVGTSVLTR…PIRIQFQNSE (85 aa).

Belongs to the TRAFAC class TrmE-Era-EngA-EngB-Septin-like GTPase superfamily. EngA (Der) GTPase family. As to quaternary structure, associates with the 50S ribosomal subunit.

Its function is as follows. GTPase that plays an essential role in the late steps of ribosome biogenesis. This chain is GTPase Der, found in Vibrio atlanticus (strain LGP32) (Vibrio splendidus (strain Mel32)).